The primary structure comprises 1482 residues: Chromosome partition protein MukB (1482 aa).

34-41 (GGNGAGKS) contacts ATP. 6 coiled-coil regions span residues 326 to 416 (LEAD…AIQY), 509 to 603 (RHLA…RAPV), 780 to 805 (RAAR…ATLS), 835 to 923 (EAEI…AKLE), 979 to 1116 (LSGN…AKAG), and 1210 to 1265 (EAIE…LQSV). A flexible hinge region spans residues 666–783 (PGGAEDSRLN…TLPLFGRAAR (118 aa)).

This sequence belongs to the SMC family. MukB subfamily. In terms of assembly, homodimerization via its hinge domain. Binds to DNA via its C-terminal region. Interacts, and probably forms a ternary complex, with MukE and MukF via its C-terminal region. The complex formation is stimulated by calcium or magnesium. Interacts with tubulin-related protein FtsZ.

It localises to the cytoplasm. The protein localises to the nucleoid. In terms of biological role, plays a central role in chromosome condensation, segregation and cell cycle progression. Functions as a homodimer, which is essential for chromosome partition. Involved in negative DNA supercoiling in vivo, and by this means organize and compact chromosomes. May achieve or facilitate chromosome segregation by condensation DNA from both sides of a centrally located replisome during cell division. This is Chromosome partition protein MukB from Enterobacter sp. (strain 638).